Reading from the N-terminus, the 94-residue chain is Small ribosomal subunit protein uS17 (94 aa).

The segment at Met1 to Tyr22 is disordered.

It belongs to the universal ribosomal protein uS17 family. Part of the 30S ribosomal subunit.

Its function is as follows. One of the primary rRNA binding proteins, it binds specifically to the 5'-end of 16S ribosomal RNA. The chain is Small ribosomal subunit protein uS17 from Kineococcus radiotolerans (strain ATCC BAA-149 / DSM 14245 / SRS30216).